The sequence spans 336 residues: MIEADRLISAGATIAEEVADRAIRPKLLAEYVGQPQVRSQMEIFIQAAKLRGDALDHLLIFGPPGLGKTTLANIVANEMGVNLRTTSGPVLEKAGDLAAMLTNLEPHDVLFIDEIHRLSPVVEEVLYPAMEDYQLDIMIGEGPAARSIKIDLPPFTLIGATTRAGSLTSPLRDRFGIVQRLEFYQVPDLQHIVGRSARHMGLEMSDDGALEVARRARGTPRIANRLLRRVRDFAEVKHDGAISAEIAAQALDMLNVDAEGFDYMDRKLLLAVIDKFFGGPVGLDNLAAAIGEERETIEDVLEPYLIQQGFLQRTPRGRMATVRAWNHFGITPPEMP.

The large ATPase domain (RuvB-L) stretch occupies residues 4–184 (ADRLISAGAT…FGIVQRLEFY (181 aa)). Residues Ile23, Arg24, Gly65, Lys68, Thr69, Thr70, 131-133 (EDY), Arg174, Tyr184, and Arg221 each bind ATP. Position 69 (Thr69) interacts with Mg(2+). Residues 185–255 (QVPDLQHIVG…IAAQALDMLN (71 aa)) are small ATPAse domain (RuvB-S). Positions 258 to 336 (AEGFDYMDRK…HFGITPPEMP (79 aa)) are head domain (RuvB-H). Arg294, Arg313, and Arg318 together coordinate DNA.

The protein belongs to the RuvB family. As to quaternary structure, homohexamer. Forms an RuvA(8)-RuvB(12)-Holliday junction (HJ) complex. HJ DNA is sandwiched between 2 RuvA tetramers; dsDNA enters through RuvA and exits via RuvB. An RuvB hexamer assembles on each DNA strand where it exits the tetramer. Each RuvB hexamer is contacted by two RuvA subunits (via domain III) on 2 adjacent RuvB subunits; this complex drives branch migration. In the full resolvosome a probable DNA-RuvA(4)-RuvB(12)-RuvC(2) complex forms which resolves the HJ.

The protein localises to the cytoplasm. The catalysed reaction is ATP + H2O = ADP + phosphate + H(+). The RuvA-RuvB-RuvC complex processes Holliday junction (HJ) DNA during genetic recombination and DNA repair, while the RuvA-RuvB complex plays an important role in the rescue of blocked DNA replication forks via replication fork reversal (RFR). RuvA specifically binds to HJ cruciform DNA, conferring on it an open structure. The RuvB hexamer acts as an ATP-dependent pump, pulling dsDNA into and through the RuvAB complex. RuvB forms 2 homohexamers on either side of HJ DNA bound by 1 or 2 RuvA tetramers; 4 subunits per hexamer contact DNA at a time. Coordinated motions by a converter formed by DNA-disengaged RuvB subunits stimulates ATP hydrolysis and nucleotide exchange. Immobilization of the converter enables RuvB to convert the ATP-contained energy into a lever motion, pulling 2 nucleotides of DNA out of the RuvA tetramer per ATP hydrolyzed, thus driving DNA branch migration. The RuvB motors rotate together with the DNA substrate, which together with the progressing nucleotide cycle form the mechanistic basis for DNA recombination by continuous HJ branch migration. Branch migration allows RuvC to scan DNA until it finds its consensus sequence, where it cleaves and resolves cruciform DNA. The chain is Holliday junction branch migration complex subunit RuvB from Salmonella arizonae (strain ATCC BAA-731 / CDC346-86 / RSK2980).